The primary structure comprises 240 residues: FMN-dependent NADH:quinone oxidoreductase 2 (240 aa).

FMN contacts are provided by residues serine 10 and 23-25 (SIS).

It belongs to the azoreductase type 1 family. Homodimer. It depends on FMN as a cofactor.

It catalyses the reaction 2 a quinone + NADH + H(+) = 2 a 1,4-benzosemiquinone + NAD(+). The enzyme catalyses N,N-dimethyl-1,4-phenylenediamine + anthranilate + 2 NAD(+) = 2-(4-dimethylaminophenyl)diazenylbenzoate + 2 NADH + 2 H(+). Functionally, quinone reductase that provides resistance to thiol-specific stress caused by electrophilic quinones. Its function is as follows. Also exhibits azoreductase activity. Catalyzes the reductive cleavage of the azo bond in aromatic azo compounds to the corresponding amines. The chain is FMN-dependent NADH:quinone oxidoreductase 2 from Idiomarina loihiensis (strain ATCC BAA-735 / DSM 15497 / L2-TR).